We begin with the raw amino-acid sequence, 512 residues long: Ascofuranone/ascochlorin biosynthesis clusters transcription regulator (512 aa).

A DNA-binding region (zn(2)-C6 fungal-type) is located at residues 14–49 (CDRCHSQKLRCPRSVEPEKANPEEPCSRCRKAGVPC). Disordered regions lie at residues 54-87 (RGKV…PYDI), 118-148 (GSGS…DPLM), and 325-351 (GCTR…DGSI). Basic residues predominate over residues 56–70 (KVGRPSKATKKKSAR). Composition is skewed to low complexity over residues 118–127 (GSGSVTTSAS) and 327–342 (TRSS…GSSM).

It localises to the nucleus. Functionally, transcription factor that regulates the expression of the asc-1 and asc-2 gene clusters that mediate the biosynthesis of both ascochlorin and ascofuranone, a strong inhibitor of cyanide-insensitive alternative oxidases and a promising drug candidate against African trypanosomiasis. Binds the 5'-CGGYGNNTTW-3' motif within promoters of the target genes. The chain is Ascofuranone/ascochlorin biosynthesis clusters transcription regulator from Acremonium egyptiacum (Oospora egyptiaca).